A 237-amino-acid polypeptide reads, in one-letter code: Ribonuclease PH (237 aa).

Residues Arg-86 and 124-126 contribute to the phosphate site; that span reads GTR.

The protein belongs to the RNase PH family. In terms of assembly, homohexameric ring arranged as a trimer of dimers.

The catalysed reaction is tRNA(n+1) + phosphate = tRNA(n) + a ribonucleoside 5'-diphosphate. In terms of biological role, phosphorolytic 3'-5' exoribonuclease that plays an important role in tRNA 3'-end maturation. Removes nucleotide residues following the 3'-CCA terminus of tRNAs; can also add nucleotides to the ends of RNA molecules by using nucleoside diphosphates as substrates, but this may not be physiologically important. Probably plays a role in initiation of 16S rRNA degradation (leading to ribosome degradation) during starvation. The sequence is that of Ribonuclease PH from Cereibacter sphaeroides (strain ATCC 17029 / ATH 2.4.9) (Rhodobacter sphaeroides).